Reading from the N-terminus, the 364-residue chain is Fructose-1,6-bisphosphatase class 1 3 (364 aa).

Mg(2+) contacts are provided by Glu101, Asp123, Leu125, and Asp126. Residues 126–129 (DGSS) and Asn218 contribute to the substrate site. A Mg(2+)-binding site is contributed by Glu290.

It belongs to the FBPase class 1 family. As to quaternary structure, homotetramer. The cofactor is Mg(2+).

It is found in the cytoplasm. It carries out the reaction beta-D-fructose 1,6-bisphosphate + H2O = beta-D-fructose 6-phosphate + phosphate. It functions in the pathway carbohydrate biosynthesis; gluconeogenesis. This Cupriavidus necator (strain ATCC 17699 / DSM 428 / KCTC 22496 / NCIMB 10442 / H16 / Stanier 337) (Ralstonia eutropha) protein is Fructose-1,6-bisphosphatase class 1 3.